Consider the following 254-residue polypeptide: 4-hydroxy-tetrahydrodipicolinate reductase (254 aa).

NAD(+) is bound by residues 8 to 13 (GGSGRV), 87 to 89 (GTT), and 111 to 114 (ATNM). The Proton donor/acceptor role is filled by histidine 143. Histidine 144 is a (S)-2,3,4,5-tetrahydrodipicolinate binding site. The active-site Proton donor is the lysine 147. Residue 153–154 (GT) participates in (S)-2,3,4,5-tetrahydrodipicolinate binding.

It belongs to the DapB family.

It localises to the cytoplasm. The enzyme catalyses (S)-2,3,4,5-tetrahydrodipicolinate + NAD(+) + H2O = (2S,4S)-4-hydroxy-2,3,4,5-tetrahydrodipicolinate + NADH + H(+). It carries out the reaction (S)-2,3,4,5-tetrahydrodipicolinate + NADP(+) + H2O = (2S,4S)-4-hydroxy-2,3,4,5-tetrahydrodipicolinate + NADPH + H(+). It participates in amino-acid biosynthesis; L-lysine biosynthesis via DAP pathway; (S)-tetrahydrodipicolinate from L-aspartate: step 4/4. Functionally, catalyzes the conversion of 4-hydroxy-tetrahydrodipicolinate (HTPA) to tetrahydrodipicolinate. In Nitratiruptor sp. (strain SB155-2), this protein is 4-hydroxy-tetrahydrodipicolinate reductase.